The following is a 306-amino-acid chain: BRCA2 and CDKN1A-interacting protein (306 aa).

Basic residues predominate over residues 1 to 10; sequence MASRPKRRAV. The tract at residues 1-45 is disordered; the sequence is MASRPKRRAVSRVPPALGDEEEEDEVEEQDEDDSDEEEDEEDEVV. The span at 18-45 shows a compositional bias: acidic residues; it reads GDEEEEDEVEEQDEDDSDEEEDEEDEVV. 2 positions are modified to phosphoserine: Ser-34 and Ser-104. The segment at 51–159 is interaction with BRCA2; the sequence is IEFEAYSISD…EKSMVEQLDR (109 aa). The tract at residues 153 to 251 is interaction with CDKN1A; that stretch reads MVEQLDRLFN…NAEEEFFYEK (99 aa). Phosphoserine is present on Ser-273.

The protein belongs to the BCP1 family. In terms of assembly, interacts with BRCA2, CDKN1A and MTDH/LYRIC. Interacts with DCTN1/p150-glued and ACTR1A/ARP1. Interacts with alpha-, beta- and gamma-tubulins. Interacts with TENT5C; the interaction has no effect on TENT5C poly(A) polymerase function.

The protein localises to the nucleus. It is found in the cytoplasm. The protein resides in the cytoskeleton. Its subcellular location is the microtubule organizing center. It localises to the centrosome. The protein localises to the centriole. It is found in the spindle pole. During interphase, required for microtubule organizing and anchoring activities. During mitosis, required for the organization and stabilization of the spindle pole. May promote cell cycle arrest by enhancing the inhibition of CDK2 activity by CDKN1A. May be required for repair of DNA damage by homologous recombination in conjunction with BRCA2. May not be involved in non-homologous end joining (NHEJ). The sequence is that of BRCA2 and CDKN1A-interacting protein (BCCIP) from Bos taurus (Bovine).